A 153-amino-acid polypeptide reads, in one-letter code: Aspartate carbamoyltransferase regulatory chain (153 aa).

C109, C114, C138, and C141 together coordinate Zn(2+).

This sequence belongs to the PyrI family. In terms of assembly, contains catalytic and regulatory chains. Requires Zn(2+) as cofactor.

Its function is as follows. Involved in allosteric regulation of aspartate carbamoyltransferase. In Enterobacter sp. (strain 638), this protein is Aspartate carbamoyltransferase regulatory chain.